Here is a 56-residue protein sequence, read N- to C-terminus: Large ribosomal subunit protein bL32 (56 aa).

Positions 1–38 (MAVQQNKKSRSKRGMRRSHDSLSTAQLSVDATSGELHR) are disordered. A compositionally biased stretch (basic residues) spans 7-16 (KKSRSKRGMR). The span at 21 to 31 (SLSTAQLSVDA) shows a compositional bias: polar residues.

It belongs to the bacterial ribosomal protein bL32 family.

In Shewanella woodyi (strain ATCC 51908 / MS32), this protein is Large ribosomal subunit protein bL32.